Reading from the N-terminus, the 81-residue chain is Spore coat protein F-like protein YraG (81 aa).

Belongs to the CotF family.

It localises to the spore coat. This is Spore coat protein F-like protein YraG (yraG) from Bacillus subtilis (strain 168).